The chain runs to 775 residues: MKSCRTLIFVAIILNGLSTFVAHAGAESKVHIVYLGEKQHDDPEFVTESHHRMLWSLLGSKEDAHSSMVHSYRHGFSGFAAKLTKSQAKKLADLPEVVHVTPDSFYQLDTTRTWDYLGLSVANPKNLLNDTNMGEEVIIGIVDSGVWPESEVFNDNGIGPVPSHWKGGCVSGENFTSSQCNKKLIGAKYFINGFLATHESFNSTESLDFISPRDRSGHGTHVATIAGGSYVPSISYKGLAGGTVRGGAPRARIAMYKACWYLDRFDINTCSSADILKAMDEAMHDGVDVLSLSIGYRFPYFPETDVRAVIATGAFHAVLKGITVVCSGGNSGPAAQTVGNTAPWILTVAATTLDRSFPTPITLGNNKLILGQAMYTGPELGFTSLVYPENPGNSNESFSGDCELLFFNSNHTMAGKVVLCFTTSTRYITVSSAVSYVKEAGGLGVIVARNPGDNLSPCEDDFPCVAVDYELGTDILLYIRSTGLPVVKIQPSKTLVGQPVGTKVADFSSRGPNSIEPAILKPDIAAPGVSILAATTTNKTFNDRGFIFLSGTSMAAPTISGVVALLKALHRDWSPAAIRSAIVTTAWRTDPFGEQIFAEGSPRKLADPFDYGGGLVNPEKAAKPGLVYDLGLEDYVLYMCSVGYNETSISQLVGKGTVCSNPKPSVLDFNLPSITIPNLKDEVTLTRTLTNVGQLESVYKVVIEPPIGIQVTVTPETLLFNSTTKRVSFKVKVSTTHKINTGYFFGSLTWSDSLHNVTIPLSVRTQILQNYYDEN.

The signal sequence occupies residues 1–26 (MKSCRTLIFVAIILNGLSTFVAHAGA). A propeptide spans 27-109 (ESKVHIVYLG…VTPDSFYQLD (83 aa)) (activation peptide). The Inhibitor I9 domain maps to 30 to 108 (VHIVYLGEKQ…HVTPDSFYQL (79 aa)). A Peptidase S8 domain is found at 113–622 (TWDYLGLSVA…GGLVNPEKAA (510 aa)). N-linked (GlcNAc...) asparagine glycosylation occurs at Asn129. Asp143 (charge relay system) is an active-site residue. 2 N-linked (GlcNAc...) asparagine glycosylation sites follow: Asn174 and Asn202. His218 acts as the Charge relay system in catalysis. The PA domain maps to 384–476 (SLVYPENPGN…VDYELGTDIL (93 aa)). N-linked (GlcNAc...) asparagine glycans are attached at residues Asn395, Asn410, and Asn538. Ser553 functions as the Charge relay system in the catalytic mechanism. N-linked (GlcNAc...) asparagine glycosylation is found at Asn645, Asn721, and Asn756.

It belongs to the peptidase S8 family.

The protein resides in the secreted. The chain is Subtilisin-like protease SBT3.8 from Arabidopsis thaliana (Mouse-ear cress).